The chain runs to 505 residues: MAQKLQADEISSIIKERIEDFELKIDVEETGKVISFGDGVAKVFGLNNVMAGEMLEFDNGDKGMALNLEETNVGVVVLGRGEGIREGSSVKRLGQLLKAPVGEALVGRVINAIGEPIDGKGPIEATEYRYVEEKAPGIMARKSVHEPLQTGIKAIDALVPIGRGQRELIIGDRQTGKTTVAIDTIINQKGQDVVCIYVAVGQKQSTVAQVVKKLEEHGAMDYTIVVNAGASEPAALQFLAPYTGVTIGEYFRDNGKHALIVYDDLSKHAVAYREMSLILRRPPGREAYPGDVFYLHSRLLERAAKLNDKLGAGSLTALPIIETQAGDVSAYIPTNVISITDGQIFLESDLFNAGIRPAINVGISVSRVGGAAQIKAMKQVAGTLRLDLAQYRELEAFAQFASDLDEASRKQLERGMRMVEILKQPPYSPLPVEKQVVIIYAGANGFLDDIEVSAIGKFEYELYSFIEAKYPQIFELIRERKALDDEIKELLNKAIEEFKASFSAE.

171–178 provides a ligand contact to ATP; that stretch reads GDRQTGKT.

It belongs to the ATPase alpha/beta chains family. F-type ATPases have 2 components, CF(1) - the catalytic core - and CF(0) - the membrane proton channel. CF(1) has five subunits: alpha(3), beta(3), gamma(1), delta(1), epsilon(1). CF(0) has three main subunits: a(1), b(2) and c(9-12). The alpha and beta chains form an alternating ring which encloses part of the gamma chain. CF(1) is attached to CF(0) by a central stalk formed by the gamma and epsilon chains, while a peripheral stalk is formed by the delta and b chains.

The protein localises to the cell inner membrane. It carries out the reaction ATP + H2O + 4 H(+)(in) = ADP + phosphate + 5 H(+)(out). Produces ATP from ADP in the presence of a proton gradient across the membrane. The alpha chain is a regulatory subunit. The protein is ATP synthase subunit alpha of Nitratiruptor sp. (strain SB155-2).